Consider the following 257-residue polypeptide: Movement protein (257 aa).

Positions 212–257 (NQSKKGSNKYVGKRNDNKGLNKEGKLFDKVRIGQNSESSDAESSSF) are disordered. Positions 224 to 242 (KRNDNKGLNKEGKLFDKVR) are enriched in basic and acidic residues. Residues 247–257 (SESSDAESSSF) show a composition bias toward low complexity.

It belongs to the tobamovirus movement protein family.

The protein resides in the host cytoplasm. It localises to the host cytoskeleton. Its subcellular location is the host cell junction. It is found in the host plasmodesma. Transports viral genome to neighboring plant cells directly through plasmosdesmata, without any budding. The movement protein allows efficient cell to cell propagation, by bypassing the host cell wall barrier. Forms a ribonucleoprotein complex with viral RNA. Binds microtubules and modulates microtubule stability. Can bind double-stranded DNA. The polypeptide is Movement protein (MP) (Pepper mild mottle virus (strain Spain) (PMMV-S)).